Reading from the N-terminus, the 297-residue chain is Protein BCCIP homolog (297 aa).

A disordered region spans residues Met1–Asn40.

It belongs to the BCP1 family.

This chain is Protein BCCIP homolog, found in Drosophila melanogaster (Fruit fly).